The chain runs to 331 residues: METVISSDSSPAVENEHPQETPESNNSVYTSFMKSHRCYDLIPTSSKLVVFDTSLQVKKAFFALVTNGVRAAPLWDSKKQSFVGMLTITDFINILHRYYKSALVQIYELEEHKIETWREVYLQDSFKPLVCISPNASLFDAVSSLIRNKIHRLPVIDPESGNTLYILTHKRILKFLKLFITEFPKPEFMSKSLEELQIGTYANIAMVRTTTPVYVALGIFVQHRVSALPVVDEKGRVVDIYSKFDVINLAAEKTYNNLDVSVTKALQHRSHYFEGVLKCYLHETLETIINRLVEAEVHRLVVVDENDVVKGIVSLSDILQALVLTGGEKKP.

Over residues 1–12 (METVISSDSSPA) the composition is skewed to polar residues. The tract at residues 1-26 (METVISSDSSPAVENEHPQETPESNN) is disordered. CBS domains lie at 43–103 (PTSS…KSAL), 125–187 (SFKP…PKPE), and 198–260 (IGTY…NLDV). Residues Arg70, 85 to 90 (MLTITD), Val130, 151 to 152 (HR), and Lys170 contribute to the ADP site. AMP-binding positions include Arg70, 85–90 (MLTITD), Val130, His151, 151–152 (HR), Lys170, Thr200, Ala205, 226–227 (SA), and 242–245 (SKFD). ATP is bound by residues Arg70, 85–90 (MLTITD), Val130, 151–152 (HR), Arg152, and Lys170. The AMPK pseudosubstrate motif lies at 138–159 (LFDAVSSLIRNKIHRLPVIDPE). 242–245 (SKFD) serves as a coordination point for ADP. 242–245 (SKFD) contributes to the ATP binding site. Residue Ser261 is modified to Phosphoserine; by ULK1. Thr263 is modified (phosphothreonine; by ULK1). Arg269 is a binding site for ADP. Arg269 contributes to the AMP binding site. Residue Arg269 participates in ATP binding. Ser270 is modified (phosphoserine; by ULK1). The region spanning 272–329 (YFEGVLKCYLHETLETIINRLVEAEVHRLVVVDENDVVKGIVSLSDILQALVLTGGEK) is the CBS 4 domain. Residues Leu277 and 298–299 (HR) each bind ADP. Residues Leu277, His298, 298 to 299 (HR), and 314 to 317 (SLSD) each bind AMP. ATP contacts are provided by residues Leu277 and 298-299 (HR).

This sequence belongs to the 5'-AMP-activated protein kinase gamma subunit family. As to quaternary structure, AMPK is a heterotrimer of an alpha catalytic subunit (PRKAA1 or PRKAA2), a beta (PRKAB1 or PRKAB2) and a gamma non-catalytic subunits (PRKAG1, PRKAG2 or PRKAG3). Interacts with FNIP1 and FNIP2. Phosphorylated by ULK1 and ULK2; leading to negatively regulate AMPK activity and suggesting the existence of a regulatory feedback loop between ULK1, ULK2 and AMPK. In terms of processing, glycosylated; O-GlcNAcylated by OGT, promoting the AMP-activated protein kinase (AMPK) activity.

AMP/ATP-binding subunit of AMP-activated protein kinase (AMPK), an energy sensor protein kinase that plays a key role in regulating cellular energy metabolism. In response to reduction of intracellular ATP levels, AMPK activates energy-producing pathways and inhibits energy-consuming processes: inhibits protein, carbohydrate and lipid biosynthesis, as well as cell growth and proliferation. AMPK acts via direct phosphorylation of metabolic enzymes, and by longer-term effects via phosphorylation of transcription regulators. Also acts as a regulator of cellular polarity by remodeling the actin cytoskeleton; probably by indirectly activating myosin. Gamma non-catalytic subunit mediates binding to AMP, ADP and ATP, leading to activate or inhibit AMPK: AMP-binding results in allosteric activation of alpha catalytic subunit (PRKAA1 or PRKAA2) both by inducing phosphorylation and preventing dephosphorylation of catalytic subunits. ADP also stimulates phosphorylation, without stimulating already phosphorylated catalytic subunit. ATP promotes dephosphorylation of catalytic subunit, rendering the AMPK enzyme inactive. This is 5'-AMP-activated protein kinase subunit gamma-1 (PRKAG1) from Homo sapiens (Human).